The sequence spans 397 residues: MLNSLDLEGRPEDTRVVVAMSGGVDSSVTAALLKSQGYDVVGITLQLYDHGAATHRKGACCAGQDIHDARNVAERLGIPHYVLDYEDRFRESVIDNFAASYASGETPVPCIECNRAIKFGDLLKTARELGASVLATGHYVASRRLPDGSRALTCAADADRDQSYFLFATTREQLDYLRFPLGDMTKPEVRELARRFELEVADKHDSQDICFVPTGRYTDIIGKLRPNAMEPGEIVDLNGRVLGAHQGIANYTIGQRKGLGIAAGAPLYVVKLDVTTRRVVVGPREALRTHRITLREVNWIGDGALDAAVRDGLELFVRVRSTRAPQPAWLRGADGSYEVELVGGEEGVSPGQACVFYDAASGRARVLGGGFIQSAVAESSATAGLVRPQRVAEPVRG.

ATP-binding positions include 19-26 (AMSGGVDS) and Leu-45. Catalysis depends on Cys-113, which acts as the Nucleophile. The cysteines at positions 113 and 210 are disulfide-linked. Gly-137 is a binding site for ATP. The interval 160-162 (RDQ) is interaction with tRNA. Cys-210 functions as the Cysteine persulfide intermediate in the catalytic mechanism.

It belongs to the MnmA/TRMU family.

It is found in the cytoplasm. The enzyme catalyses S-sulfanyl-L-cysteinyl-[protein] + uridine(34) in tRNA + AH2 + ATP = 2-thiouridine(34) in tRNA + L-cysteinyl-[protein] + A + AMP + diphosphate + H(+). Functionally, catalyzes the 2-thiolation of uridine at the wobble position (U34) of tRNA, leading to the formation of s(2)U34. The chain is tRNA-specific 2-thiouridylase MnmA from Bradyrhizobium sp. (strain ORS 278).